We begin with the raw amino-acid sequence, 429 residues long: Bifunctional protein GlmU (429 aa).

The interval 1-223 (MKTSILILAA…EDEFMGINDK (223 aa)) is pyrophosphorylase. UDP-N-acetyl-alpha-D-glucosamine-binding positions include 8 to 11 (LAAG), lysine 22, and 81 to 82 (GT). Aspartate 102 is a binding site for Mg(2+). UDP-N-acetyl-alpha-D-glucosamine contacts are provided by glycine 135, glutamate 149, asparagine 164, and asparagine 221. Asparagine 221 is a Mg(2+) binding site. Residues 224-244 (FELSIAENFMQEKIKKYWMQQ) form a linker region. The N-acetyltransferase stretch occupies residues 245–429 (GVIFHLPQST…KDYYYKKFQK (185 aa)). Residues arginine 308 and lysine 325 each contribute to the UDP-N-acetyl-alpha-D-glucosamine site. The active-site Proton acceptor is histidine 336. Tyrosine 339 and asparagine 350 together coordinate UDP-N-acetyl-alpha-D-glucosamine. Residues 359-360 (NY), serine 378, alanine 396, and arginine 413 each bind acetyl-CoA.

It in the N-terminal section; belongs to the N-acetylglucosamine-1-phosphate uridyltransferase family. This sequence in the C-terminal section; belongs to the transferase hexapeptide repeat family. As to quaternary structure, homotrimer. Mg(2+) serves as cofactor.

It is found in the cytoplasm. It carries out the reaction alpha-D-glucosamine 1-phosphate + acetyl-CoA = N-acetyl-alpha-D-glucosamine 1-phosphate + CoA + H(+). The catalysed reaction is N-acetyl-alpha-D-glucosamine 1-phosphate + UTP + H(+) = UDP-N-acetyl-alpha-D-glucosamine + diphosphate. It participates in nucleotide-sugar biosynthesis; UDP-N-acetyl-alpha-D-glucosamine biosynthesis; N-acetyl-alpha-D-glucosamine 1-phosphate from alpha-D-glucosamine 6-phosphate (route II): step 2/2. Its pathway is nucleotide-sugar biosynthesis; UDP-N-acetyl-alpha-D-glucosamine biosynthesis; UDP-N-acetyl-alpha-D-glucosamine from N-acetyl-alpha-D-glucosamine 1-phosphate: step 1/1. The protein operates within bacterial outer membrane biogenesis; LPS lipid A biosynthesis. Catalyzes the last two sequential reactions in the de novo biosynthetic pathway for UDP-N-acetylglucosamine (UDP-GlcNAc). The C-terminal domain catalyzes the transfer of acetyl group from acetyl coenzyme A to glucosamine-1-phosphate (GlcN-1-P) to produce N-acetylglucosamine-1-phosphate (GlcNAc-1-P), which is converted into UDP-GlcNAc by the transfer of uridine 5-monophosphate (from uridine 5-triphosphate), a reaction catalyzed by the N-terminal domain. The polypeptide is Bifunctional protein GlmU (Campylobacter jejuni subsp. jejuni serotype O:6 (strain 81116 / NCTC 11828)).